The sequence spans 146 residues: Small ribosomal subunit protein uS9z (146 aa).

This sequence belongs to the universal ribosomal protein uS9 family.

This chain is Small ribosomal subunit protein uS9z (RPS16A), found in Arabidopsis thaliana (Mouse-ear cress).